The sequence spans 577 residues: Isocitrate dehydrogenase kinase/phosphatase (577 aa).

Residues 315-321 and Lys336 each bind ATP; that span reads APGIRGM. Asp371 is an active-site residue.

It belongs to the AceK family.

The protein localises to the cytoplasm. It carries out the reaction L-seryl-[isocitrate dehydrogenase] + ATP = O-phospho-L-seryl-[isocitrate dehydrogenase] + ADP + H(+). Bifunctional enzyme which can phosphorylate or dephosphorylate isocitrate dehydrogenase (IDH) on a specific serine residue. This is a regulatory mechanism which enables bacteria to bypass the Krebs cycle via the glyoxylate shunt in response to the source of carbon. When bacteria are grown on glucose, IDH is fully active and unphosphorylated, but when grown on acetate or ethanol, the activity of IDH declines drastically concomitant with its phosphorylation. In Escherichia fergusonii (strain ATCC 35469 / DSM 13698 / CCUG 18766 / IAM 14443 / JCM 21226 / LMG 7866 / NBRC 102419 / NCTC 12128 / CDC 0568-73), this protein is Isocitrate dehydrogenase kinase/phosphatase.